A 103-amino-acid chain; its full sequence is Large ribosomal subunit protein bL21 (103 aa).

It belongs to the bacterial ribosomal protein bL21 family. Part of the 50S ribosomal subunit. Contacts protein L20.

In terms of biological role, this protein binds to 23S rRNA in the presence of protein L20. This Clostridium botulinum (strain Alaska E43 / Type E3) protein is Large ribosomal subunit protein bL21.